Consider the following 383-residue polypeptide: Opsin Rh4 (383 aa).

The Extracellular segment spans residues 1-57; it reads MDIAGSLCNASEGPVLRPEARVSGNGDLQFLGWNVPPDQIQHIPEHWLTQLEPPASM. Asn9 carries N-linked (GlcNAc...) asparagine glycosylation. The chain crosses the membrane as a helical span at residues 58-82; that stretch reads HYMLGVFYIFLFCASTVGNGMVIWI. Residues 83–94 are Cytoplasmic-facing; that stretch reads FSTSKALRTPSN. Residues 95–117 form a helical membrane-spanning segment; sequence MFVLNLAVFDFIMCLKAPIFIYN. Residues 118–133 lie on the Extracellular side of the membrane; it reads SFHRGFALGNTGCQIF. Cysteines 130 and 207 form a disulfide. The helical transmembrane segment at 134 to 153 threads the bilayer; the sequence is AAIGSYSGIGAGMTNAAIGY. Residues 154 to 171 lie on the Cytoplasmic side of the membrane; it reads DRLNVITKPMNRNMTFTK. Residues 172 to 196 traverse the membrane as a helical segment; it reads AIIMNVIIWLYCTPWVVLPLTQFWD. Residues 197-220 lie on the Extracellular side of the membrane; that stretch reads RFVPEGYLTSCTFDYLTDNFDTRL. Residues 221-248 traverse the membrane as a helical segment; that stretch reads FVGTIFFFSFVCPTLMIIYYYSQIVGHV. Residues 249 to 284 lie on the Cytoplasmic side of the membrane; it reads FSHEKALREQAKKMNVESLRSNVDKSKDTAEIRIAK. A helical membrane pass occupies residues 285-308; it reads AAITICFLFFVSWTPYGVMSLIGA. At 309–316 the chain is on the extracellular side; it reads FGDKSLLT. Residues 317–341 traverse the membrane as a helical segment; the sequence is PGATMIPACTCKLVACIDPFVYAIS. Position 328 is an N6-(retinylidene)lysine (Lys328). Residues 342 to 383 are Cytoplasmic-facing; it reads HPRYRMELQKRCPWLAIDEKAPESSSAASTTTTQEQQQTTAA. A disordered region spans residues 361 to 383; the sequence is KAPESSSAASTTTTQEQQQTTAA. Over residues 364 to 383 the composition is skewed to low complexity; sequence ESSSAASTTTTQEQQQTTAA.

Belongs to the G-protein coupled receptor 1 family. Opsin subfamily. In terms of processing, phosphorylated on some or all of the serine and threonine residues present in the C-terminal region.

The protein localises to the membrane. In terms of biological role, visual pigments are the light-absorbing molecules that mediate vision. They consist of an apoprotein, opsin, covalently linked to cis-retinal. The chain is Opsin Rh4 (Rh4) from Drosophila virilis (Fruit fly).